The following is a 531-amino-acid chain: uncharacterized protein (531 aa).

The signal sequence occupies residues 1–22 (MRLQFKLLGFLTLLGTSTILSA). Cys-23 carries N-palmitoyl cysteine lipidation. Cys-23 is lipidated: S-diacylglycerol cysteine. The interval 31–51 (EPNNIEESGPITPTTPTTDVP) is disordered. A compositionally biased stretch (low complexity) spans 40–51 (PITPTTPTTDVP).

Belongs to the MG067/MG068/MG395 family.

Its subcellular location is the cell membrane. This is an uncharacterized protein from Mycoplasma pneumoniae (strain ATCC 29342 / M129 / Subtype 1) (Mycoplasmoides pneumoniae).